A 563-amino-acid chain; its full sequence is Putative cysteine ligase BshC (563 aa).

Residues Lys493–Leu518 are a coiled coil.

The protein belongs to the BshC family.

In Chlorobaculum tepidum (strain ATCC 49652 / DSM 12025 / NBRC 103806 / TLS) (Chlorobium tepidum), this protein is Putative cysteine ligase BshC.